The sequence spans 124 residues: Ribonuclease P protein component (124 aa).

It belongs to the RnpA family. In terms of assembly, consists of a catalytic RNA component (M1 or rnpB) and a protein subunit.

The catalysed reaction is Endonucleolytic cleavage of RNA, removing 5'-extranucleotides from tRNA precursor.. In terms of biological role, RNaseP catalyzes the removal of the 5'-leader sequence from pre-tRNA to produce the mature 5'-terminus. It can also cleave other RNA substrates such as 4.5S RNA. The protein component plays an auxiliary but essential role in vivo by binding to the 5'-leader sequence and broadening the substrate specificity of the ribozyme. This Mycolicibacterium gilvum (strain PYR-GCK) (Mycobacterium gilvum (strain PYR-GCK)) protein is Ribonuclease P protein component.